A 688-amino-acid polypeptide reads, in one-letter code: Sialic acid-binding Ig-like lectin 10 (688 aa).

A signal peptide spans 1–17 (MSLLLFLLSFLLDGPQG). Residues 18 to 543 (QMESYFLQVQ…DKDSATAFSK (526 aa)) are Extracellular-facing. Positions 26-138 (VQRIVKAQEG…SFKEEFRLQV (113 aa)) constitute an Ig-like V-type domain. 3 cysteine pairs are disulfide-bonded: C37-C172, C42-C102, and C163-C214. R120 lines the N-acetylneuraminate pocket. The region spanning 145-228 (PDIFIPEVLE…SRMSTQRTVR (84 aa)) is the Ig-like C2-type 1 domain. N195 and N246 each carry an N-linked (GlcNAc...) asparagine glycan. 2 Ig-like C2-type domains span residues 250 to 334 (PDLH…LDLS) and 339 to 436 (PQDL…LSLS). Intrachain disulfides connect C271–C318 and C375–C420. A helical membrane pass occupies residues 544-564 (GAVLGFGITALLALCLIVVIV). At 565-688 (KTLQKKGTQE…YSDYTEVRVH (124 aa)) the chain is on the cytoplasmic side. The short motif at 588–593 (LDYINV) is the ITIM motif 1 element. Positions 602–656 (RNWKAEPDAPSRSSPLDTHFPKPKKKQKDPHFTYPGCPDPTSSSQVPVSENNPEE) are disordered. A compositionally biased stretch (polar residues) spans 641–652 (PTSSSQVPVSEN). Positions 657–662 (LHYAAL) match the ITIM motif 2 motif. Position 659 is a phosphotyrosine (Y659).

The protein belongs to the immunoglobulin superfamily. SIGLEC (sialic acid binding Ig-like lectin) family. As to quaternary structure, interacts with PTPN6/SHP-1 upon phosphorylation. Interacts with NCF1. Interacts with CD24; the probable CD24:SIGLEC10 complex is proposed to inhibit HGMB1-mediated tissue damage immune response. Interacts with HMGB1; the interaction is dependent on CD24. Associates with membrane IgM on the B cell surface. Interacts with RIGI, CBL and PTPN11. Post-translationally, phosphorylation of Tyr-659 is involved in binding to PTPN6. As to expression, expressed in B cells with high levels in pre-B cells and B1a cells of the peritoneal cavity.

Its subcellular location is the cell membrane. Putative adhesion molecule that mediates sialic-acid dependent binding to cells. Preferentially binds to alpha-2,3- or alpha-2,6-linked sialic acid. The sialic acid recognition site may be masked by cis interactions with sialic acids on the same cell surface. In the immune response, seems to act as an inhibitory receptor upon ligand induced tyrosine phosphorylation by recruiting cytoplasmic phosphatase(s) via their SH2 domain(s) that block signal transduction through dephosphorylation of signaling molecules. Involved in negative regulation of B-cell antigen receptor signaling and specifically acts on B1 cells to inhibit Ca(2+) signaling, cellular expansion and antibody secretion. The inhibition of B cell activation is dependent on PTPN6/SHP-1. In association with CD24 may be involved in the selective suppression of the immune response to danger-associated molecular patterns (DAMPs) such as HMGB1, HSP70 and HSP90. In association with CD24 may regulate the immune repsonse of natural killer (NK) cells. Plays a role in the control of autoimmunity. During initiation of adaptive immune responses by CD8-alpha(+) dendritic cells inhibits cross-presentation by impairing the formation of MHC class I-peptide complexes. The function seems to implicate recruitment of PTPN6/SHP-1, which dephosphorylates NCF1 of the NADPH oxidase complex consequently promoting phagosomal acidification. Its function is as follows. (Microbial infection) During infection by RNA viruses inhibits RIG-I signaling in macrophages by promoting its CBL-dependent ubiquitination and degradation via PTPN11/SHP-2. The polypeptide is Sialic acid-binding Ig-like lectin 10 (Siglec10) (Mus musculus (Mouse)).